The chain runs to 729 residues: Zorya protein ZorA (729 aa).

The next 3 helical transmembrane spans lie at P20 to F40, L135 to L155, and V177 to L197.

Belongs to the MotA family.

The protein resides in the cell inner membrane. In terms of biological role, component of antiviral defense system Zorya type I, composed of ZorA, ZorB, ZorC and ZorD. Expression of Zorya type I in E.coli (strain MG1655) confers 10,000-fold resistance to phage SECphi27, 100-fold resistance to lambda, and 10-fold resistance to T7. While most T7 infected Zorya-containing cells undergo abortive infection, a minority produce viable phage progeny. These eventually accumulate to a high multiplicity of infection, leading to culture collapse by 2 hours after initial infection. ZorA and ZorB probably assemble in the cell inner membrane and exert their effect there. The protein is Zorya protein ZorA of Escherichia coli O139:H28 (strain E24377A / ETEC).